The chain runs to 63 residues: Large ribosomal subunit protein bL28 (63 aa).

It belongs to the bacterial ribosomal protein bL28 family.

The chain is Large ribosomal subunit protein bL28 from Clostridium novyi (strain NT).